The primary structure comprises 718 residues: Probable protein S-acyltransferase 19 (718 aa).

The next 2 membrane-spanning stretches (helical) occupy residues 16–36 (VVAITVFCLLSVAYYAFFAPF) and 41–61 (IWEYILLGVYSPVALIVFVLY). A disordered region spans residues 100-125 (ETGSHLQSSPSVASRTSTLPNSSVKG). A compositionally biased stretch (polar residues) spans 103 to 124 (SHLQSSPSVASRTSTLPNSSVK). Residues 174 to 224 (LFCTLCNAEVRKFSKHCRSCDKCVDCFDHHCRWLNNCVGRKNYMTFISLMA) enclose the DHHC domain. The active-site S-palmitoyl cysteine intermediate is Cys-204. A run of 2 helical transmembrane segments spans residues 222-242 (LMAVSLLWLLIEAGVGIAVIV) and 277-297 (AVSMLALFPLGELFFFHMLLI). 3 disordered regions span residues 454-511 (SSVS…HVHE), 598-649 (PATT…QQQQ), and 664-718 (GPLV…GTRK). Polar residues-rich tracts occupy residues 479–488 (CRNSYAPSQG) and 598–626 (PATTSEPRTRFSSQNQPIPSSHMGNTQNP). The segment covering 673 to 687 (DGLRHDGDSGREGQD) has biased composition (basic and acidic residues).

The protein belongs to the DHHC palmitoyltransferase family.

It is found in the cell membrane. It carries out the reaction L-cysteinyl-[protein] + hexadecanoyl-CoA = S-hexadecanoyl-L-cysteinyl-[protein] + CoA. Palmitoyl acyltransferase. This is Probable protein S-acyltransferase 19 (PAT19) from Arabidopsis thaliana (Mouse-ear cress).